The chain runs to 476 residues: UDP-N-acetylmuramate--L-alanine ligase (476 aa).

125-131 (GTHGKTT) contacts ATP.

Belongs to the MurCDEF family.

The protein resides in the cytoplasm. It catalyses the reaction UDP-N-acetyl-alpha-D-muramate + L-alanine + ATP = UDP-N-acetyl-alpha-D-muramoyl-L-alanine + ADP + phosphate + H(+). It functions in the pathway cell wall biogenesis; peptidoglycan biosynthesis. Functionally, cell wall formation. The sequence is that of UDP-N-acetylmuramate--L-alanine ligase from Actinobacillus succinogenes (strain ATCC 55618 / DSM 22257 / CCUG 43843 / 130Z).